The following is a 377-amino-acid chain: Copper-containing nitrite reductase (377 aa).

Residues 1 to 35 (MTNTLQMTRRTMLTGAAVAGALTPILTSGGGNASP) constitute a signal peptide (tat-type signal). Plastocyanin-like domains follow at residues 99 to 194 (MTFD…IMVL) and 259 to 360 (GAVG…FKVT). Residues His132, His137, His172, Cys173, His182, Met187, and His343 each contribute to the Cu cation site.

Belongs to the multicopper oxidase family. Homotrimer. Cu(2+) is required as a cofactor. It depends on Cu(+) as a cofactor. FAD serves as cofactor. In terms of processing, predicted to be exported by the Tat system. The position of the signal peptide cleavage has not been experimentally proven.

It localises to the periplasm. It catalyses the reaction nitric oxide + Fe(III)-[cytochrome c] + H2O = Fe(II)-[cytochrome c] + nitrite + 2 H(+). It participates in nitrogen metabolism; nitrate reduction (denitrification); dinitrogen from nitrate: step 2/4. This chain is Copper-containing nitrite reductase (nirK), found in Rhizobium sullae (Rhizobium hedysari).